Consider the following 89-residue polypeptide: Acylphosphatase (89 aa).

Residues 4–89 (CVRCLIAGRV…IPEIQMFEVR (86 aa)) form the Acylphosphatase-like domain. Active-site residues include Arg19 and Asn37.

The protein belongs to the acylphosphatase family.

The catalysed reaction is an acyl phosphate + H2O = a carboxylate + phosphate + H(+). The chain is Acylphosphatase (acyP) from Nitrosococcus oceani (strain ATCC 19707 / BCRC 17464 / JCM 30415 / NCIMB 11848 / C-107).